The sequence spans 279 residues: MILDLDIGNTLSKWRLKDVASSEIRSRGAVWTREEWRPGADIPDLDVVEAVRISSVARASVLRDTVALLRRQVGAVHVARSTPEALGVSCGYEEPARLGVDRWMGVLAGYQLTGGCCSVDCGSAITMDFVLPGGRHLGGYIIPGLRLMKESLKLGTRNVAIDPDSEADELLAPGRNTVEAVNHGIYMSAVSAVNRIYSEVCDREGVALPLLLTGGDARVVSRGLRVPHAIWPDMVYAGLETCFPMTAAERAGRLSGAPPPPPAPPLEKVRASLAFSMLL.

6 to 13 (DIGNTLSK) provides a ligand contact to ATP. Residues Y92 and 99–102 (GVDR) contribute to the substrate site. D101 acts as the Proton acceptor in catalysis. D120 is a binding site for K(+). Position 123 (S123) interacts with ATP. T177 serves as a coordination point for substrate.

This sequence belongs to the type III pantothenate kinase family. In terms of assembly, homodimer. The cofactor is NH4(+). It depends on K(+) as a cofactor.

It is found in the cytoplasm. The enzyme catalyses (R)-pantothenate + ATP = (R)-4'-phosphopantothenate + ADP + H(+). It participates in cofactor biosynthesis; coenzyme A biosynthesis; CoA from (R)-pantothenate: step 1/5. In terms of biological role, catalyzes the phosphorylation of pantothenate (Pan), the first step in CoA biosynthesis. The sequence is that of Type III pantothenate kinase from Chromohalobacter salexigens (strain ATCC BAA-138 / DSM 3043 / CIP 106854 / NCIMB 13768 / 1H11).